A 119-amino-acid polypeptide reads, in one-letter code: Phosphoribosyl-AMP cyclohydrolase (119 aa).

Residue Asp-77 participates in Mg(2+) binding. Zn(2+) is bound at residue Cys-78. 2 residues coordinate Mg(2+): Asp-79 and Asp-81. Positions 94 and 101 each coordinate Zn(2+).

It belongs to the PRA-CH family. Homodimer. Mg(2+) serves as cofactor. The cofactor is Zn(2+).

The protein resides in the cytoplasm. The catalysed reaction is 1-(5-phospho-beta-D-ribosyl)-5'-AMP + H2O = 1-(5-phospho-beta-D-ribosyl)-5-[(5-phospho-beta-D-ribosylamino)methylideneamino]imidazole-4-carboxamide. The protein operates within amino-acid biosynthesis; L-histidine biosynthesis; L-histidine from 5-phospho-alpha-D-ribose 1-diphosphate: step 3/9. Functionally, catalyzes the hydrolysis of the adenine ring of phosphoribosyl-AMP. This chain is Phosphoribosyl-AMP cyclohydrolase, found in Cereibacter sphaeroides (strain ATCC 17023 / DSM 158 / JCM 6121 / CCUG 31486 / LMG 2827 / NBRC 12203 / NCIMB 8253 / ATH 2.4.1.) (Rhodobacter sphaeroides).